Here is a 165-residue protein sequence, read N- to C-terminus: SsrA-binding protein (165 aa).

It belongs to the SmpB family.

Its subcellular location is the cytoplasm. Functionally, required for rescue of stalled ribosomes mediated by trans-translation. Binds to transfer-messenger RNA (tmRNA), required for stable association of tmRNA with ribosomes. tmRNA and SmpB together mimic tRNA shape, replacing the anticodon stem-loop with SmpB. tmRNA is encoded by the ssrA gene; the 2 termini fold to resemble tRNA(Ala) and it encodes a 'tag peptide', a short internal open reading frame. During trans-translation Ala-aminoacylated tmRNA acts like a tRNA, entering the A-site of stalled ribosomes, displacing the stalled mRNA. The ribosome then switches to translate the ORF on the tmRNA; the nascent peptide is terminated with the 'tag peptide' encoded by the tmRNA and targeted for degradation. The ribosome is freed to recommence translation, which seems to be the essential function of trans-translation. The chain is SsrA-binding protein from Prochlorococcus marinus (strain MIT 9515).